A 241-amino-acid polypeptide reads, in one-letter code: tRNA pseudouridine synthase B (241 aa).

Asp-45 (nucleophile) is an active-site residue.

The protein belongs to the pseudouridine synthase TruB family. Type 1 subfamily.

It carries out the reaction uridine(55) in tRNA = pseudouridine(55) in tRNA. Functionally, responsible for synthesis of pseudouridine from uracil-55 in the psi GC loop of transfer RNAs. The polypeptide is tRNA pseudouridine synthase B (Chlamydia trachomatis serovar L2 (strain ATCC VR-902B / DSM 19102 / 434/Bu)).